The sequence spans 132 residues: MDIDLLWSFGGWFFILFPETINYCMAKLRSTSQISHFTNPRSCSSLFFVALLIITILITMLQSSTSMEVTSLPTHQPTSSNSHDESSTSSTATTTTDLHPKRTHHQSHPKPTRSFEAGAHEVPSGPNPISNR.

Residues 1–26 (MDIDLLWSFGGWFFILFPETINYCMA) form the signal peptide. A helical membrane pass occupies residues 42-62 (SCSSLFFVALLIITILITMLQ). Residues 68–77 (EVTSLPTHQP) show a composition bias toward polar residues. The tract at residues 68–132 (EVTSLPTHQP…PSGPNPISNR (65 aa)) is disordered. Positions 87–96 (STSSTATTTT) are enriched in low complexity. The span at 101–111 (KRTHHQSHPKP) shows a compositional bias: basic residues. Pro123 and Pro126 each carry hydroxyproline. O-linked (Ara...) hydroxyproline glycosylation occurs at Pro126.

It belongs to the CLV3/ESR signal peptide family. Interacts specifically with the leucine-rich repeat receptor-like protein kinase TDR. In terms of processing, the TDIFp peptide contains two hydroxprolines, but hydroxylation had no direct effect on TDIFp activity. Post-translationally, the O-glycosylation (arabinosylation) of the hydroxyproline Pro-126 enhances binding affinity of the TDIFp peptide for its receptor.

It localises to the secreted. It is found in the extracellular space. The protein localises to the cell membrane. Its function is as follows. Extracellular signal peptide that regulates cell fate. Represses tracheary element differentiation but promotes the formation of procambial cells adjacent to phloem cells in the veins. In Zinnia elegans (Garden zinnia), this protein is CLAVATA3/ESR (CLE)-related protein TDIF.